A 446-amino-acid polypeptide reads, in one-letter code: Maltoporin (446 aa).

Positions 1 to 25 are cleaved as a signal peptide; sequence MMITLRKLPLAVAVAAGVMSAQAMA.

It belongs to the porin LamB (TC 1.B.3) family. In terms of assembly, homotrimer formed of three 18-stranded antiparallel beta-barrels, containing three independent channels.

It is found in the cell outer membrane. It carries out the reaction beta-maltose(in) = beta-maltose(out). In terms of biological role, involved in the transport of maltose and maltodextrins. The protein is Maltoporin of Escherichia coli O8 (strain IAI1).